Reading from the N-terminus, the 116-residue chain is MIQVYKYDENFMFVEPLVVTEIDEKGDYIFPDNCTSVPLPDSPSYYLPRFDLSKQVWIETASQEYIDSLSPPPEEPSDVELLGQSLAEARILILKQNRIILNLQNEVKNLKDGTTA.

The protein is SPbeta prophage-derived uncharacterized protein YomQ (yomQ) of Bacillus subtilis (strain 168).